Consider the following 163-residue polypeptide: Large ribosomal subunit protein uL10 (163 aa).

This sequence belongs to the universal ribosomal protein uL10 family. Part of the ribosomal stalk of the 50S ribosomal subunit. The N-terminus interacts with L11 and the large rRNA to form the base of the stalk. The C-terminus forms an elongated spine to which L12 dimers bind in a sequential fashion forming a multimeric L10(L12)X complex.

In terms of biological role, forms part of the ribosomal stalk, playing a central role in the interaction of the ribosome with GTP-bound translation factors. This chain is Large ribosomal subunit protein uL10, found in Mannheimia succiniciproducens (strain KCTC 0769BP / MBEL55E).